A 541-amino-acid chain; its full sequence is Protein wntless homolog (541 aa).

Residues 1-42 form the signal peptide; it reads MAGAIIENMSTRKLCIVGGILLVFQVIAFLVGGLIAPSPTTA. Residues 43-232 are Lumenal-facing; it reads VPYMSVKCID…GIHQNGGFTK (190 aa). Residues 233 to 253 traverse the membrane as a helical segment; that stretch reads VWFAMKTFLTPSILIIMVWYW. At 254–268 the chain is on the cytoplasmic side; the sequence is RRITLMTRAPVLLEK. A helical transmembrane segment spans residues 269 to 289; the sequence is VIFALGISMTFINIPVEWFSI. Residues 290–303 lie on the Lumenal side of the membrane; sequence GFDWTWMLLFGDIR. Residues 304–324 traverse the membrane as a helical segment; the sequence is QGIFYAMLLSFWIIFCGEHMM. At 325-331 the chain is on the cytoplasmic side; the sequence is DQNERNR. Residues 332–352 form a helical membrane-spanning segment; that stretch reads LSGYWKQVGPIAVGSFCLFIF. Residues 353–380 are Lumenal-facing; that stretch reads DMCERGVQLKNPFYSIWTTEVGTELAMA. Residues 381-401 form a helical membrane-spanning segment; the sequence is FIIVAGICLCLYFLFLCFMVF. Residues 402 to 431 are Cytoplasmic-facing; the sequence is QVFRNISGKQSSLPAMSKARRLHYEGLIFR. A helical membrane pass occupies residues 432–452; sequence FKFLMLITLACAAMTVIFFIV. Residues 453 to 471 lie on the Lumenal side of the membrane; the sequence is SQVTEGHWKWGDITIQVNS. The helical transmembrane segment at 472 to 492 threads the bilayer; that stretch reads AFFTGIYGMWNLYVFALMFLY. Topologically, residues 493 to 541 are cytoplasmic; it reads APSHKNYGEDQSNGDLGVSSGEELQLTTTITHVDGPTEVYKLARKEAQE.

It belongs to the wntless family.

Its subcellular location is the golgi apparatus membrane. It is found in the cytoplasmic vesicle membrane. In terms of biological role, may play an essential role in Wnt signaling pathway. May be required for Wnt-dependent patterning processes. The protein is Protein wntless homolog (WLS) of Gallus gallus (Chicken).